The primary structure comprises 743 residues: Catalase-peroxidase (743 aa).

Residues 1 to 15 are compositionally biased toward polar residues; the sequence is MSSDSRPPQPDTSTQ. The segment at 1 to 40 is disordered; that stretch reads MSSDSRPPQPDTSTQSNSESESPAISSPTPQDHAPMTNRD. Positions 16 to 28 are enriched in low complexity; it reads SNSESESPAISSP. The segment at residues 110 to 233 is a cross-link (tryptophyl-tyrosyl-methioninium (Trp-Tyr) (with M-259)); the sequence is WHAAGTYRIQ…YGATTMGLIY (124 aa). The active-site Proton acceptor is the His111. The segment at residues 233–259 is a cross-link (tryptophyl-tyrosyl-methioninium (Tyr-Met) (with W-110)); it reads YVNPEGPEGKPDPVAAAHDIRETFARM. His274 contacts heme b. A disordered region spans residues 490 to 511; sequence DKRGGANGGRLRLEPQKSWESN.

Belongs to the peroxidase family. Peroxidase/catalase subfamily. As to quaternary structure, homodimer or homotetramer. Requires heme b as cofactor. Formation of the three residue Trp-Tyr-Met cross-link is important for the catalase, but not the peroxidase activity of the enzyme.

It catalyses the reaction H2O2 + AH2 = A + 2 H2O. The catalysed reaction is 2 H2O2 = O2 + 2 H2O. In terms of biological role, bifunctional enzyme with both catalase and broad-spectrum peroxidase activity. This chain is Catalase-peroxidase, found in Mycobacterium marinum (strain ATCC BAA-535 / M).